Here is a 462-residue protein sequence, read N- to C-terminus: MQKVLGRIQAQVLRSRATNALANVVRHEATSSRTAAKPAATSKEFRERQVRFNIKNEQTEGRPLYLDAQATTPMDPRVLDAMLPYLTNFYGNPHSRTHAYGWETESAVEKAREQVATLIGADPKEIIFTSGATESNNIAVKGVARFYGTKKRHVITTQTEHKCVLDSCRALENEGFKVTYLPVLANGLIDLQQLEETITSETSLVSIMTVNNEIGVRQPVDEIGKLCRSRRVFFHTDAAQAVGKVPLDVNAMNIDLMSISGHKIYGPKGVGALYVRRRPRVRLEPIQSGGGQERGLRSGTVPAPLAVGLGAAAELSLREMDYDKKWVDFLSNRLLDRISSALPHVIRNGDAKATYNGCLNLSFAYVEGESLLMALKDVALSSGSACTSASLEPSYVLRAIGTDEDLAHSSIRFGIGRFTTVEEVDYTADKCIKHVERLREMSPLWEMVQEGIDLKTIQWSQH.

Pyridoxal 5'-phosphate is bound by residues 132–133, Asn212, Gln240, and 260–262; these read AT and SGH. Lys263 bears the N6-(pyridoxal phosphate)lysine mark. Pyridoxal 5'-phosphate is bound at residue Thr300. Cys386 functions as the Cysteine persulfide intermediate in the catalytic mechanism. Cys386 serves as a coordination point for [2Fe-2S] cluster.

This sequence belongs to the class-V pyridoxal-phosphate-dependent aminotransferase family. NifS/IscS subfamily. As to quaternary structure, component of the mitochondrial core iron-sulfur cluster (ISC) assembly complex at least composed of the cystein desulfurase Nfs1, the scaffold protein IscU, the accessory protein bcn92/Isd11/Lyrm4, and probably fh/frataxin. Interacts with bcn92/Isd11/Lyrm4 and IscU. Requires pyridoxal 5'-phosphate as cofactor. Ubiquitous expression at high levels in any life stage.

Its subcellular location is the mitochondrion. It is found in the nucleus. It catalyses the reaction (sulfur carrier)-H + L-cysteine = (sulfur carrier)-SH + L-alanine. Active when in complex with bcn92/Isd11/Lyrm4. L-cysteine binding kinetics are reduced in the presence of bcn92/Isd11/Lyrm4 and IscU. Activity is regulated by other components of the mitochondrial core iron-sulfur cluster (ISC) complex; Activity is reduced in the presence of IscU but enhanced when both IscU and fh/frataxin are present. Catalyzes the removal of elemental sulfur from cysteine to produce alanine. It supplies the inorganic sulfur for iron-sulfur (Fe-S) clusters. The sequence is that of Cysteine desulfurase, mitochondrial from Drosophila melanogaster (Fruit fly).